A 1001-amino-acid chain; its full sequence is O-GlcNAcase NagJ (1001 aa).

The N-terminal stretch at 1-30 (MKRKMLKRLLTSAFACMFIANGLITTTVRA) is a signal peptide. A catalytic domain region spans residues 179 to 469 (VSARGIVEGF…WNRAIDMLYG (291 aa)). One can recognise a GH84 domain in the interval 180–452 (SARGIVEGFY…TAADYSWNMD (273 aa)). Residues G187, K218, and D297 each contribute to the a protein site. D298 acts as the Proton donor in catalysis. A protein-binding positions include Y335, 394 to 396 (WWN), D401, and N429. Coiled coils occupy residues 515 to 543 (KEDA…KANL) and 573 to 597 (VAQL…LNTA). Residues 916–1001 (PVRDFKASEI…KESLTLRTAR (86 aa)) enclose the Fibronectin type-III domain.

It belongs to the glycosyl hydrolase 84 family.

The enzyme catalyses 3-O-(N-acetyl-beta-D-glucosaminyl)-L-seryl-[protein] + H2O = N-acetyl-D-glucosamine + L-seryl-[protein]. The catalysed reaction is 3-O-(N-acetyl-beta-D-glucosaminyl)-L-threonyl-[protein] + H2O = L-threonyl-[protein] + N-acetyl-D-glucosamine. With respect to regulation, inhibited by O-(2-acetamido-2-deoxy-D-glucopyranosylidene)amino-N-phenyl-carbamate (PUGNAc) and streptozotocin. Functionally, binds carbohydrates. Capable of hydrolyzing the glycosidic link of O-GlcNAcylated proteins. Can bind and deglycosylate O-glycosylated peptides from mammals. The chain is O-GlcNAcase NagJ (nagJ) from Clostridium perfringens (strain ATCC 13124 / DSM 756 / JCM 1290 / NCIMB 6125 / NCTC 8237 / Type A).